A 463-amino-acid polypeptide reads, in one-letter code: MSTGTVVQVIGAVVDVEFPQDAVPQIYDALKITGEGACKGLVLEVQQQLGGGVVRTIAMGSSDGLRRGLEVVNTGSPISVPVGVATLGRIMNVLGEPIDECGEIGEEERYVIHRSAPSYEDQSSSTELLETGIKVIDLVCPFAKGGKVGLFGGAGVGKTVNMMELINNIAKAHSGLSVFAGVGERTREGNDFYYEMKDSGVLDKVAMVYGQMNEPPGNRLRVALSGLTMAEKFRDEGRDVLLFVDNIYRYTLAGTEVSALLGRMPSAVGYQPTLAEEMGVLQERITSTKSGSITSVQAVYVPADDLTDPSPATTFAHLDATVVLSRQIASLGIYPAVDPLDSTSRQLDPQVVGQEHYDVANGVQTVLQRYKELKDIIAILGMDELSDEDKTAVARARKIERFLSQPFHVAEVFTGSPGKYVSLKDTIRGFKGLLEGEFDHIPEQAFYMVGTIDEAVEKANKKK.

ATP is bound at residue 152-159 (GGAGVGKT).

The protein belongs to the ATPase alpha/beta chains family. In terms of assembly, F-type ATPases have 2 components, CF(1) - the catalytic core - and CF(0) - the membrane proton channel. CF(1) has five subunits: alpha(3), beta(3), gamma(1), delta(1), epsilon(1). CF(0) has three main subunits: a(1), b(2) and c(9-12). The alpha and beta chains form an alternating ring which encloses part of the gamma chain. CF(1) is attached to CF(0) by a central stalk formed by the gamma and epsilon chains, while a peripheral stalk is formed by the delta and b chains.

It localises to the cell inner membrane. The enzyme catalyses ATP + H2O + 4 H(+)(in) = ADP + phosphate + 5 H(+)(out). Functionally, produces ATP from ADP in the presence of a proton gradient across the membrane. The catalytic sites are hosted primarily by the beta subunits. The protein is ATP synthase subunit beta of Shewanella denitrificans (strain OS217 / ATCC BAA-1090 / DSM 15013).